A 199-amino-acid polypeptide reads, in one-letter code: dITP/XTP pyrophosphatase (199 aa).

8-13 lines the substrate pocket; the sequence is SGNAGK. Asp-69 serves as the catalytic Proton acceptor. Position 69 (Asp-69) interacts with Mg(2+). Substrate contacts are provided by residues Ser-70, 154 to 157, Lys-177, and 182 to 183; these read FGYN and HR.

Belongs to the HAM1 NTPase family. Homodimer. Mg(2+) is required as a cofactor.

The enzyme catalyses XTP + H2O = XMP + diphosphate + H(+). It carries out the reaction dITP + H2O = dIMP + diphosphate + H(+). It catalyses the reaction ITP + H2O = IMP + diphosphate + H(+). In terms of biological role, pyrophosphatase that catalyzes the hydrolysis of nucleoside triphosphates to their monophosphate derivatives, with a high preference for the non-canonical purine nucleotides XTP (xanthosine triphosphate), dITP (deoxyinosine triphosphate) and ITP. Seems to function as a house-cleaning enzyme that removes non-canonical purine nucleotides from the nucleotide pool, thus preventing their incorporation into DNA/RNA and avoiding chromosomal lesions. The chain is dITP/XTP pyrophosphatase from Xylella fastidiosa (strain Temecula1 / ATCC 700964).